A 229-amino-acid chain; its full sequence is Dolichyldiphosphatase 1 (229 aa).

A run of 4 helical transmembrane segments spans residues 27–47 (LFNA…ITLI), 94–114 (MPSS…LFYL), 120–140 (FGSK…AAGV), and 156–176 (FCGS…IEYI).

This sequence belongs to the dolichyldiphosphatase family.

It is found in the endoplasmic reticulum membrane. The catalysed reaction is a di-trans,poly-cis-dolichyl diphosphate + H2O = a di-trans,poly-cis-dolichyl phosphate + phosphate + H(+). Its pathway is protein modification; protein glycosylation. Functionally, required for efficient N-glycosylation. Necessary for maintaining optimal levels of dolichol-linked oligosaccharides. Hydrolyzes dolichyl pyrophosphate at a very high rate and dolichyl monophosphate at a much lower rate. Does not act on phosphatidate. The sequence is that of Dolichyldiphosphatase 1 (dolpp1) from Dictyostelium discoideum (Social amoeba).